Consider the following 384-residue polypeptide: N-acetyldiaminopimelate deacetylase (384 aa).

Asp-75 is an active-site residue. Glu-134 (proton acceptor) is an active-site residue.

It belongs to the peptidase M20A family. N-acetyldiaminopimelate deacetylase subfamily.

The catalysed reaction is N-acetyl-(2S,6S)-2,6-diaminopimelate + H2O = (2S,6S)-2,6-diaminopimelate + acetate. The protein operates within amino-acid biosynthesis; L-lysine biosynthesis via DAP pathway; LL-2,6-diaminopimelate from (S)-tetrahydrodipicolinate (acetylase route): step 3/3. In terms of biological role, catalyzes the conversion of N-acetyl-diaminopimelate to diaminopimelate and acetate. The chain is N-acetyldiaminopimelate deacetylase from Lactobacillus helveticus (strain DPC 4571).